A 303-amino-acid chain; its full sequence is N-acetyl-D-glucosamine kinase (303 aa).

Residues 4-11 (GFDIGGTK) and 133-140 (GVGGGLIF) contribute to the ATP site. 4 residues coordinate Zn(2+): His-157, Cys-177, Cys-179, and Cys-184.

The protein belongs to the ROK (NagC/XylR) family. NagK subfamily.

It carries out the reaction N-acetyl-D-glucosamine + ATP = N-acetyl-D-glucosamine 6-phosphate + ADP + H(+). Its pathway is cell wall biogenesis; peptidoglycan recycling. In terms of biological role, catalyzes the phosphorylation of N-acetyl-D-glucosamine (GlcNAc) derived from cell-wall degradation, yielding GlcNAc-6-P. The sequence is that of N-acetyl-D-glucosamine kinase from Shigella sonnei (strain Ss046).